Reading from the N-terminus, the 474-residue chain is Trehalose-6-phosphate synthase (474 aa).

Residue Arg10 coordinates D-glucose 6-phosphate. Position 22–23 (22–23 (GG)) interacts with UDP-alpha-D-glucose. 2 residues coordinate D-glucose 6-phosphate: Tyr77 and Asp131. UDP-alpha-D-glucose-binding residues include Arg263 and Lys268. Residue Arg301 coordinates D-glucose 6-phosphate. UDP-alpha-D-glucose contacts are provided by residues Phe340 and 366-370 (LVAKE).

Belongs to the glycosyltransferase 20 family. As to quaternary structure, homotetramer.

The catalysed reaction is D-glucose 6-phosphate + UDP-alpha-D-glucose = alpha,alpha-trehalose 6-phosphate + UDP + H(+). It functions in the pathway glycan biosynthesis; trehalose biosynthesis. In terms of biological role, probably involved in the osmoprotection via the biosynthesis of trehalose. Catalyzes the transfer of glucose from UDP-alpha-D-glucose (UDP-Glc) to D-glucose 6-phosphate (Glc-6-P) to form trehalose-6-phosphate. Acts with retention of the anomeric configuration of the UDP-sugar donor. This Enterobacter sp. (strain 638) protein is Trehalose-6-phosphate synthase.